Consider the following 255-residue polypeptide: Type III pantothenate kinase (255 aa).

6–13 (DVGNTNIV) is a binding site for ATP. Residues Tyr-100 and 107–110 (GADR) each bind substrate. Catalysis depends on Asp-109, which acts as the Proton acceptor. Asp-129 provides a ligand contact to K(+). Thr-132 is an ATP binding site. Thr-184 contributes to the substrate binding site.

The protein belongs to the type III pantothenate kinase family. In terms of assembly, homodimer. It depends on NH4(+) as a cofactor. K(+) serves as cofactor.

It is found in the cytoplasm. The enzyme catalyses (R)-pantothenate + ATP = (R)-4'-phosphopantothenate + ADP + H(+). Its pathway is cofactor biosynthesis; coenzyme A biosynthesis; CoA from (R)-pantothenate: step 1/5. Functionally, catalyzes the phosphorylation of pantothenate (Pan), the first step in CoA biosynthesis. In Thermoanaerobacter sp. (strain X514), this protein is Type III pantothenate kinase.